The following is a 266-amino-acid chain: Probable metal transport system membrane protein TP_0036 (266 aa).

Transmembrane regions (helical) follow at residues 10–30, 34–54, 56–76, 88–108, 120–140, 172–192, 211–231, and 238–258; these read AFVASFLIALLCPLVGMHLVL, ALMGDALAHGSLAGVSIAVSC, IHPGWGSFFFTALVGVLIEFL, LSIVLSLSVGIAVTLLSSGLI, ILVVSTRDLWIMLALSVFCVG, VASVVISATIAASIKITGILV, FLLTLVAAFLFSMLDTALGLV, and VAPGGFTALVSVVVLMLVIAL.

The protein belongs to the ABC-3 integral membrane protein family.

The protein resides in the cell inner membrane. Part of an ATP-driven transport system TP_0034/TP_0035/TP_0036 for a metal. This chain is Probable metal transport system membrane protein TP_0036, found in Treponema pallidum (strain Nichols).